A 115-amino-acid chain; its full sequence is U3-lycotoxin-Ls1o (115 aa).

The N-terminal stretch at 1–20 (MKFVLLFGVLLVTLFSYSSA) is a signal peptide. The propeptide occupies 21–44 (EMLDDFDQADEDELLSLIEKEEAR). 4 cysteine pairs are disulfide-bonded: C48/C63, C55/C72, C62/C87, and C74/C85.

This sequence belongs to the neurotoxin 19 (CSTX) family. 01 subfamily. In terms of tissue distribution, expressed by the venom gland.

It localises to the secreted. The protein is U3-lycotoxin-Ls1o of Lycosa singoriensis (Wolf spider).